We begin with the raw amino-acid sequence, 326 residues long: NDRG-like protein (326 aa).

The protein belongs to the NDRG family.

This chain is NDRG-like protein, found in Dictyostelium discoideum (Social amoeba).